We begin with the raw amino-acid sequence, 100 residues long: uncharacterized protein (100 aa).

A helical membrane pass occupies residues 28–45; it reads VFLVFYIITMVKIYIFLI.

It localises to the membrane. This is an uncharacterized protein from Saccharomyces cerevisiae (strain ATCC 204508 / S288c) (Baker's yeast).